Consider the following 518-residue polypeptide: Tropomyosin-1, isoforms 33/34 (518 aa).

A coiled-coil region spans residues 14 to 267 (DKDGALERAL…DDLIVEKERY (254 aa)). Disordered regions lie at residues 101-125 (RSEE…ESER) and 288-518 (FWNP…APPA). Over residues 293-305 (NPKPPTPKLPTPT) the composition is skewed to pro residues. A compositionally biased stretch (low complexity) spans 318–348 (AAEAAAAAEAEAAEAAAAAGEAGPDGAPAAP). Composition is skewed to pro residues over residues 357 to 374 (EPTP…PPPF) and 394 to 405 (EPPPPGSEPEPV). Positions 406–518 (PAAEGEAAPA…AAAEGEAPPA (113 aa)) are enriched in low complexity.

It belongs to the tropomyosin family. As to quaternary structure, homodimer. Both isoforms are only expressed in indirect flight muscles.

Its subcellular location is the cytoplasm. The protein localises to the cytoskeleton. Functionally, tropomyosin, in association with the troponin complex, plays a central role in the calcium dependent regulation of muscle contraction. The chain is Tropomyosin-1, isoforms 33/34 (Tm1) from Drosophila melanogaster (Fruit fly).